A 156-amino-acid chain; its full sequence is MKIQLVAVGTKMPKWVEEGYKEYSRRFPKDMPLELVEITAGKRGKNADIARILQKEGEAMLAAVPKGNRIVTLDIPGKRWDTEQLAEQLEAWKLDARDVSILIGGPEGLAPACKAAADQSWSLSPLTLPHPLVRVVMAESLYRAWSITANHPYHRE.

S-adenosyl-L-methionine-binding positions include Leu-73, Gly-104, and 123–128; that span reads LSPLTL.

Belongs to the RNA methyltransferase RlmH family. As to quaternary structure, homodimer.

It is found in the cytoplasm. It carries out the reaction pseudouridine(1915) in 23S rRNA + S-adenosyl-L-methionine = N(3)-methylpseudouridine(1915) in 23S rRNA + S-adenosyl-L-homocysteine + H(+). Functionally, specifically methylates the pseudouridine at position 1915 (m3Psi1915) in 23S rRNA. In Aliivibrio fischeri (strain ATCC 700601 / ES114) (Vibrio fischeri), this protein is Ribosomal RNA large subunit methyltransferase H.